The sequence spans 317 residues: Glycerol-3-phosphate dehydrogenase [NAD(P)+] (317 aa).

4 residues coordinate NADPH: Ser-14, Phe-15, Arg-35, and Lys-109. Residues Lys-109 and Gly-137 each coordinate sn-glycerol 3-phosphate. Ala-141 is a binding site for NADPH. Residues Lys-192, Asp-248, Ser-258, Arg-259, and Asn-260 each coordinate sn-glycerol 3-phosphate. Lys-192 acts as the Proton acceptor in catalysis. Arg-259 provides a ligand contact to NADPH. Residues Leu-283 and Glu-285 each contribute to the NADPH site.

Belongs to the NAD-dependent glycerol-3-phosphate dehydrogenase family.

It localises to the cytoplasm. It carries out the reaction sn-glycerol 3-phosphate + NAD(+) = dihydroxyacetone phosphate + NADH + H(+). The enzyme catalyses sn-glycerol 3-phosphate + NADP(+) = dihydroxyacetone phosphate + NADPH + H(+). It participates in membrane lipid metabolism; glycerophospholipid metabolism. In terms of biological role, catalyzes the reduction of the glycolytic intermediate dihydroxyacetone phosphate (DHAP) to sn-glycerol 3-phosphate (G3P), the key precursor for phospholipid synthesis. This chain is Glycerol-3-phosphate dehydrogenase [NAD(P)+], found in Rickettsia akari (strain Hartford).